Reading from the N-terminus, the 150-residue chain is uncharacterized protein (150 aa).

A signal peptide spans 1–23 (MYSILIACLVLLLCLIIYVGHRA).

Belongs to the asfivirus EP152R family.

Its subcellular location is the virion. This is an uncharacterized protein from African swine fever virus (isolate Warthog/Namibia/Wart80/1980) (ASFV).